The sequence spans 981 residues: Protein deadlock (981 aa).

Residues 1–60 (MEKLDKIRMSQKLSCWQHILTTLGTSSKTEQEWNTFFKGFLESWRKPYCIQTSCDPSIPL) form a required for interaction with rhi/rhino region. Disordered regions lie at residues 72 to 195 (LQEN…ACAP), 274 to 307 (IMDK…DDQL), 327 to 352 (SRNE…NKKE), 375 to 446 (LRKS…PNNI), 554 to 586 (GLDD…ETLK), and 642 to 662 (LVHQ…TAAR). Polar residues-rich tracts occupy residues 104-113 (PSKSHSTGST) and 150-160 (NHTTSIFSKAQ). The span at 167-191 (KLSSTKKRPDTCAPTDDSRKNREPR) shows a compositional bias: basic and acidic residues. Residues 337-352 (EKVKLKGERPAQNKKE) show a composition bias toward basic and acidic residues. A compositionally biased stretch (basic residues) spans 377 to 390 (KSVKKSAKQQKPRV). Basic and acidic residues predominate over residues 409–419 (TQDKQSTHEMI). The segment covering 422 to 446 (QAKTISEASGQQTSQVQSSLSPNNI) has biased composition (polar residues). Positions 652–662 (RNQRDEATAAR) are enriched in basic and acidic residues.

As to quaternary structure, component of the Rhino-Deadlock-Cutoff (RDC) complex, composed of rhi/rhino, del/deadlock and cuff/cutoff. Interacts (via N-terminus) with rhi/rhino (via C-terminus); this interaction is direct. Interacts (via C-terminus) with cuff/cutoff; this interaction is direct.

The protein localises to the nucleus. It is found in the cytoplasm. The protein resides in the cytoskeleton. Its subcellular location is the microtubule organizing center. It localises to the centrosome. The protein localises to the chromosome. Developmental protein involved in oogenesis. Required for germline maintenance, stability of mitotic spindles, localization of patterning determinants, oocyte growth and fusome biogenesis in males and females. Also required for dorso-ventral and antero-posterior patterning of oocyte and eggshell. May be involved in microtubule function during oogenesis. Part of a rhi-dependent transcription machinery that enables the generation of piRNA precursors from heterochromatin while maintaining the suppression of transposon-encoded promoters and enhancers. Component of the RDC complex (rhi, del and cuff) which binds to repressive H3K9me3 marks in the piRNA clusters. RDC promotes the bidirectional transcription of piRNA clusters at these sites by interacting with Moonshiner which forms a complex with the transcription initiation factors TfIIA-S and Trf2. This mechanism allows transcription to occur in piRNA clusters despite the lack of proper promoter elements and in the presence of the repressive H3K9me3 mark. As part of the RDC complex, involved in suppression of splicing. The chain is Protein deadlock (del) from Drosophila melanogaster (Fruit fly).